Here is a 423-residue protein sequence, read N- to C-terminus: Glutamyl-tRNA reductase (423 aa).

Residues Thr49 to Arg52, Ser107, Glu112 to Gln114, and Gln118 contribute to the substrate site. Cys50 (nucleophile) is an active-site residue. Gly187–Ile192 lines the NADP(+) pocket.

The protein belongs to the glutamyl-tRNA reductase family. In terms of assembly, homodimer.

The catalysed reaction is (S)-4-amino-5-oxopentanoate + tRNA(Glu) + NADP(+) = L-glutamyl-tRNA(Glu) + NADPH + H(+). It functions in the pathway porphyrin-containing compound metabolism; protoporphyrin-IX biosynthesis; 5-aminolevulinate from L-glutamyl-tRNA(Glu): step 1/2. Functionally, catalyzes the NADPH-dependent reduction of glutamyl-tRNA(Glu) to glutamate 1-semialdehyde (GSA). This chain is Glutamyl-tRNA reductase, found in Pseudoalteromonas atlantica (strain T6c / ATCC BAA-1087).